The chain runs to 510 residues: D-alanine--D-alanyl carrier protein ligase (510 aa).

157 to 158 is a binding site for ATP; it reads TS. Asp-202 serves as a coordination point for D-alanine. 297–302 serves as a coordination point for ATP; that stretch reads NTYGPT. Val-306 is a binding site for D-alanine. Residues Asp-389 and Lys-498 each coordinate ATP. Lys-498 serves as a coordination point for D-alanine.

This sequence belongs to the ATP-dependent AMP-binding enzyme family. DltA subfamily.

Its subcellular location is the cytoplasm. It catalyses the reaction holo-[D-alanyl-carrier protein] + D-alanine + ATP = D-alanyl-[D-alanyl-carrier protein] + AMP + diphosphate. It functions in the pathway cell wall biogenesis; lipoteichoic acid biosynthesis. In terms of biological role, catalyzes the first step in the D-alanylation of lipoteichoic acid (LTA), the activation of D-alanine and its transfer onto the D-alanyl carrier protein (Dcp) DltC. In an ATP-dependent two-step reaction, forms a high energy D-alanyl-AMP intermediate, followed by transfer of the D-alanyl residue as a thiol ester to the phosphopantheinyl prosthetic group of the Dcp. D-alanylation of LTA plays an important role in modulating the properties of the cell wall in Gram-positive bacteria, influencing the net charge of the cell wall. The sequence is that of D-alanine--D-alanyl carrier protein ligase from Listeria monocytogenes serovar 1/2a (strain ATCC BAA-679 / EGD-e).